The chain runs to 238 residues: Ribonuclease PH (238 aa).

Residues R86 and 124–126 (GTR) contribute to the phosphate site.

This sequence belongs to the RNase PH family. In terms of assembly, homohexameric ring arranged as a trimer of dimers.

The enzyme catalyses tRNA(n+1) + phosphate = tRNA(n) + a ribonucleoside 5'-diphosphate. In terms of biological role, phosphorolytic 3'-5' exoribonuclease that plays an important role in tRNA 3'-end maturation. Removes nucleotide residues following the 3'-CCA terminus of tRNAs; can also add nucleotides to the ends of RNA molecules by using nucleoside diphosphates as substrates, but this may not be physiologically important. Probably plays a role in initiation of 16S rRNA degradation (leading to ribosome degradation) during starvation. The chain is Ribonuclease PH from Agrobacterium fabrum (strain C58 / ATCC 33970) (Agrobacterium tumefaciens (strain C58)).